A 219-amino-acid chain; its full sequence is Guanylate kinase (219 aa).

Positions 15–194 (GLMLVISSPS…AFSSVRAIVE (180 aa)) constitute a Guanylate kinase-like domain. 22–29 (SPSGAGKS) lines the ATP pocket.

The protein belongs to the guanylate kinase family.

Its subcellular location is the cytoplasm. It carries out the reaction GMP + ATP = GDP + ADP. Functionally, essential for recycling GMP and indirectly, cGMP. This Rhizobium meliloti (strain 1021) (Ensifer meliloti) protein is Guanylate kinase.